Reading from the N-terminus, the 143-residue chain is uncharacterized protein (143 aa).

Residues 1–143 (MRSSRQKASI…WFSQTVKRKA (143 aa)) form a disordered region. Basic and acidic residues-rich tracts occupy residues 34 to 46 (ISAEKEEEEKHLD) and 61 to 76 (EYQKETKEKETDRKIV). 2 stretches are compositionally biased toward acidic residues: residues 77 to 93 (DDEEETKFETTLEPEEE) and 103 to 115 (YEEEDEDEEPDLA).

This is an uncharacterized protein from Bacillus subtilis (strain 168).